We begin with the raw amino-acid sequence, 70 residues long: Aurein-3.1 (70 aa).

Positions 1–22 (MAFLKKSLFLVLFLGLVSLSIC) are cleaved as a signal peptide. Positions 23-49 (EKEKRQNEEDEDENEAANHEEGSEEKR) are excised as a propeptide. Positions 27-48 (RQNEEDEDENEAANHEEGSEEK) are disordered. Positions 38–48 (AANHEEGSEEK) are enriched in basic and acidic residues. Isoleucine amide is present on Ile66.

As to expression, expressed by the skin dorsal glands.

The protein resides in the secreted. It is found in the target cell membrane. Amphipathic alpha-helical antimicrobial peptide with weak to potent activity against Gram-positive bacteria, and no activity against Gram-negative bacteria. Probably acts by disturbing membrane functions with its amphipathic structure. Shows anticancer activity. The protein is Aurein-3.1 of Ranoidea aurea (Green and golden bell frog).